Here is a 214-residue protein sequence, read N- to C-terminus: Small ribosomal subunit protein uS2 (214 aa).

This sequence belongs to the universal ribosomal protein uS2 family.

The chain is Small ribosomal subunit protein uS2 from Methanococcoides burtonii (strain DSM 6242 / NBRC 107633 / OCM 468 / ACE-M).